A 123-amino-acid chain; its full sequence is Large ribosomal subunit protein uL14 (123 aa).

The protein belongs to the universal ribosomal protein uL14 family. In terms of assembly, part of the 50S ribosomal subunit. Forms a cluster with proteins L3 and L19. In the 70S ribosome, L14 and L19 interact and together make contacts with the 16S rRNA in bridges B5 and B8.

Functionally, binds to 23S rRNA. Forms part of two intersubunit bridges in the 70S ribosome. In Vibrio parahaemolyticus serotype O3:K6 (strain RIMD 2210633), this protein is Large ribosomal subunit protein uL14.